A 205-amino-acid chain; its full sequence is Putative STAG3-like protein 1 (205 aa).

One can recognise an SCD domain in the interval Pro10 to Met95.

This sequence belongs to the SCC3 family.

The protein resides in the nucleus. The protein is Putative STAG3-like protein 1 (STAG3L1) of Homo sapiens (Human).